The following is a 593-amino-acid chain: Probable tripeptidyl-peptidase SED3 (593 aa).

The first 18 residues, 1–18, serve as a signal peptide directing secretion; the sequence is MLLRWHSVIPLFLTMTVA. The propeptide at 19–198 is removed in mature form; the sequence is LPNTYRTVVE…SLQVIYSSTN (180 aa). N-linked (GlcNAc...) asparagine glycans are attached at residues N198, N204, N261, and N275. Positions 206 to 592 constitute a Peptidase S53 domain; sequence TITPRCLREL…RILAKIVQHM (387 aa). Active-site charge relay system residues include E282 and D286. N295 is a glycosylation site (N-linked (GlcNAc...) asparagine). The Charge relay system role is filled by S496. 2 residues coordinate Ca(2+): D538 and I539. N554 and N566 each carry an N-linked (GlcNAc...) asparagine glycan. Ca(2+) contacts are provided by G570 and D572.

Ca(2+) is required as a cofactor.

It localises to the secreted. The protein resides in the extracellular space. It carries out the reaction Release of an N-terminal tripeptide from a polypeptide.. Its function is as follows. Secreted tripeptidyl-peptidase which degrades proteins at acidic pHs and is involved in virulence. The sequence is that of Probable tripeptidyl-peptidase SED3 (SED3) from Trichophyton verrucosum (strain HKI 0517).